Here is a 617-residue protein sequence, read N- to C-terminus: Dihydroxy-acid dehydratase (617 aa).

Residue Asp81 coordinates Mg(2+). Cys122 is a binding site for [2Fe-2S] cluster. The Mg(2+) site is built by Asp123 and Lys124. Lys124 carries the N6-carboxylysine modification. Cys195 contacts [2Fe-2S] cluster. Glu491 is a Mg(2+) binding site. The active-site Proton acceptor is Ser517.

It belongs to the IlvD/Edd family. As to quaternary structure, homodimer. The cofactor is [2Fe-2S] cluster. Mg(2+) serves as cofactor.

It carries out the reaction (2R)-2,3-dihydroxy-3-methylbutanoate = 3-methyl-2-oxobutanoate + H2O. The enzyme catalyses (2R,3R)-2,3-dihydroxy-3-methylpentanoate = (S)-3-methyl-2-oxopentanoate + H2O. It participates in amino-acid biosynthesis; L-isoleucine biosynthesis; L-isoleucine from 2-oxobutanoate: step 3/4. Its pathway is amino-acid biosynthesis; L-valine biosynthesis; L-valine from pyruvate: step 3/4. In terms of biological role, functions in the biosynthesis of branched-chain amino acids. Catalyzes the dehydration of (2R,3R)-2,3-dihydroxy-3-methylpentanoate (2,3-dihydroxy-3-methylvalerate) into 2-oxo-3-methylpentanoate (2-oxo-3-methylvalerate) and of (2R)-2,3-dihydroxy-3-methylbutanoate (2,3-dihydroxyisovalerate) into 2-oxo-3-methylbutanoate (2-oxoisovalerate), the penultimate precursor to L-isoleucine and L-valine, respectively. In Nitrosococcus oceani (strain ATCC 19707 / BCRC 17464 / JCM 30415 / NCIMB 11848 / C-107), this protein is Dihydroxy-acid dehydratase.